Reading from the N-terminus, the 319-residue chain is N-acyl-aromatic-L-amino acid amidohydrolase (carboxylate-forming) (319 aa).

The interval 1 to 210 (MCSLPVPREP…TVLDFIELFN (210 aa)) is hydrolytic domain. Residues H21 and E24 each contribute to the Zn(2+) site. Residues R63 and 70-71 (NR) contribute to the substrate site. H116 contacts Zn(2+). Substrate is bound by residues E178 and Y288. Residues 211–318 (QGTAFPAFEM…PALTPAPSPA (108 aa)) are shielding domain.

Belongs to the AspA/AstE family. Aspartoacylase subfamily. As to quaternary structure, exists as a mixture of homodimers and homotetramer, both catalytically active. (Microbial infection) Interacts with hepatitis C virus/HCV core protein. It depends on Zn(2+) as a cofactor.

The protein resides in the apical cell membrane. Its subcellular location is the cytoplasm. The enzyme catalyses an N-acyl-aromatic L-alpha-amino acid + H2O = an aromatic L-alpha-amino acid + a carboxylate. The catalysed reaction is an N-acetyl-L-cysteine-S-conjugate + H2O = an S-substituted L-cysteine + acetate. Its function is as follows. Plays an important role in deacetylating mercapturic acids in kidney proximal tubules. Also acts on N-acetyl-aromatic amino acids. This is N-acyl-aromatic-L-amino acid amidohydrolase (carboxylate-forming) (ACY3) from Homo sapiens (Human).